The following is a 357-amino-acid chain: 3-isopropylmalate dehydrogenase (357 aa).

The substrate site is built by arginine 97, arginine 107, arginine 135, and aspartate 224. Residues aspartate 224, aspartate 248, and aspartate 252 each coordinate Mg(2+). 282-294 provides a ligand contact to NAD(+); that stretch reads GSAPDIAGQDKAN.

Belongs to the isocitrate and isopropylmalate dehydrogenases family. LeuB type 1 subfamily. As to quaternary structure, homodimer. It depends on Mg(2+) as a cofactor. Mn(2+) serves as cofactor.

It localises to the cytoplasm. The enzyme catalyses (2R,3S)-3-isopropylmalate + NAD(+) = 4-methyl-2-oxopentanoate + CO2 + NADH. The protein operates within amino-acid biosynthesis; L-leucine biosynthesis; L-leucine from 3-methyl-2-oxobutanoate: step 3/4. Functionally, catalyzes the oxidation of 3-carboxy-2-hydroxy-4-methylpentanoate (3-isopropylmalate) to 3-carboxy-4-methyl-2-oxopentanoate. The product decarboxylates to 4-methyl-2 oxopentanoate. The protein is 3-isopropylmalate dehydrogenase of Parasynechococcus marenigrum (strain WH8102).